A 131-amino-acid polypeptide reads, in one-letter code: Methylglyoxal synthase (131 aa).

In terms of domain architecture, MGS-like spans 1–131; it reads MKIALIAHDK…GDLDYRKLRK (131 aa). Substrate contacts are provided by residues His8, Lys12, 34–37, and 54–55; these read TGTT and SG. The active-site Proton donor/acceptor is Asp60. Position 87 (His87) interacts with substrate.

This sequence belongs to the methylglyoxal synthase family.

It catalyses the reaction dihydroxyacetone phosphate = methylglyoxal + phosphate. Its function is as follows. Catalyzes the formation of methylglyoxal from dihydroxyacetone phosphate. The protein is Methylglyoxal synthase of Bacillus cereus (strain ATCC 10987 / NRS 248).